The sequence spans 211 residues: CASP-like protein 1B1 (211 aa).

Residues 1 to 29 (MDLERGSKTPPSSAPAAAAATTTTSTCCS) form a disordered region. The Cytoplasmic segment spans residues 1 to 55 (MDLERGSKTPPSSAPAAAAATTTTSTCCSNKRPQLRDRLVALQPVVLRAAATLAT). The segment covering 9–26 (TPPSSAPAAAAATTTTST) has biased composition (low complexity). A helical membrane pass occupies residues 56–76 (AVAAAVMALNAQSYTAVVAIV). Residues 77–94 (GTRPLTQTFTTKFRDTPA) are Extracellular-facing. The helical transmembrane segment at 95-115 (FVYFVIANAIAAVYNLVMLLF) threads the bilayer. Topologically, residues 116-123 (RCLILRRR) are cytoplasmic. Residues 124 to 144 (MAGLVVHMLDMVIMALLATGA) traverse the membrane as a helical segment. Over 145–176 (ATAAAMAELGKNGNVHARWNPICDRFGSFCSR) the chain is Extracellular. The helical transmembrane segment at 177–197 (GGVALASSFTGVALMLALNLL) threads the bilayer. At 198 to 211 (SAASNAQCSPGQYE) the chain is on the cytoplasmic side.

The protein belongs to the Casparian strip membrane proteins (CASP) family. In terms of assembly, homodimer and heterodimers.

The protein resides in the cell membrane. The sequence is that of CASP-like protein 1B1 from Sorghum bicolor (Sorghum).